The following is a 133-amino-acid chain: Small ribosomal subunit protein uS19 (133 aa).

The protein belongs to the universal ribosomal protein uS19 family.

Functionally, protein S19 forms a complex with S13 that binds strongly to the 16S ribosomal RNA. The polypeptide is Small ribosomal subunit protein uS19 (Thermococcus sibiricus (strain DSM 12597 / MM 739)).